Consider the following 245-residue polypeptide: DNA repair protein RecO (245 aa).

This sequence belongs to the RecO family.

In terms of biological role, involved in DNA repair and RecF pathway recombination. This chain is DNA repair protein RecO, found in Klebsiella pneumoniae (strain 342).